Here is a 394-residue protein sequence, read N- to C-terminus: Elongation factor Tu 1 (394 aa).

The region spanning K10–E204 is the tr-type G domain. The tract at residues G19–T26 is G1. G19 to T26 contacts GTP. A Mg(2+)-binding site is contributed by T26. The tract at residues G60–S64 is G2. The G3 stretch occupies residues D81 to G84. Residues D81–H85 and N136–D139 each bind GTP. The segment at N136–D139 is G4. Residues S174–L176 are G5.

Belongs to the TRAFAC class translation factor GTPase superfamily. Classic translation factor GTPase family. EF-Tu/EF-1A subfamily. In terms of assembly, monomer.

It is found in the cytoplasm. The catalysed reaction is GTP + H2O = GDP + phosphate + H(+). Functionally, GTP hydrolase that promotes the GTP-dependent binding of aminoacyl-tRNA to the A-site of ribosomes during protein biosynthesis. This is Elongation factor Tu 1 from Vibrio vulnificus (strain YJ016).